The primary structure comprises 475 residues: UDP-N-acetylmuramate--L-alanine ligase (475 aa).

125–131 is an ATP binding site; the sequence is GTHGKTT.

The protein belongs to the MurCDEF family.

It is found in the cytoplasm. It catalyses the reaction UDP-N-acetyl-alpha-D-muramate + L-alanine + ATP = UDP-N-acetyl-alpha-D-muramoyl-L-alanine + ADP + phosphate + H(+). It participates in cell wall biogenesis; peptidoglycan biosynthesis. In terms of biological role, cell wall formation. The chain is UDP-N-acetylmuramate--L-alanine ligase from Haemophilus influenzae (strain 86-028NP).